The following is a 62-amino-acid chain: Photosystem II reaction center protein Z (62 aa).

Helical transmembrane passes span 8–28 and 41–61; these read AVFA…VVFA and FSGT…NSLI.

Belongs to the PsbZ family. PSII is composed of 1 copy each of membrane proteins PsbA, PsbB, PsbC, PsbD, PsbE, PsbF, PsbH, PsbI, PsbJ, PsbK, PsbL, PsbM, PsbT, PsbY, PsbZ, Psb30/Ycf12, at least 3 peripheral proteins of the oxygen-evolving complex and a large number of cofactors. It forms dimeric complexes.

The protein resides in the plastid. Its subcellular location is the chloroplast thylakoid membrane. Its function is as follows. May control the interaction of photosystem II (PSII) cores with the light-harvesting antenna, regulates electron flow through the 2 photosystem reaction centers. PSII is a light-driven water plastoquinone oxidoreductase, using light energy to abstract electrons from H(2)O, generating a proton gradient subsequently used for ATP formation. This is Photosystem II reaction center protein Z from Spinacia oleracea (Spinach).